Here is a 430-residue protein sequence, read N- to C-terminus: Glutamate-1-semialdehyde 2,1-aminomutase (430 aa).

Lys265 carries the N6-(pyridoxal phosphate)lysine modification.

The protein belongs to the class-III pyridoxal-phosphate-dependent aminotransferase family. HemL subfamily. In terms of assembly, homodimer. Pyridoxal 5'-phosphate is required as a cofactor.

Its subcellular location is the cytoplasm. It catalyses the reaction (S)-4-amino-5-oxopentanoate = 5-aminolevulinate. It participates in porphyrin-containing compound metabolism; protoporphyrin-IX biosynthesis; 5-aminolevulinate from L-glutamyl-tRNA(Glu): step 2/2. This Shewanella putrefaciens (strain CN-32 / ATCC BAA-453) protein is Glutamate-1-semialdehyde 2,1-aminomutase.